A 131-amino-acid chain; its full sequence is Global transcriptional regulator Spx (131 aa).

The cysteines at positions 10 and 13 are disulfide-linked.

It belongs to the ArsC family. Spx subfamily. In terms of assembly, interacts with the C-terminal domain of the alpha subunit of the RNAP.

The protein localises to the cytoplasm. Global transcriptional regulator that plays a key role in stress response and exerts either positive or negative regulation of genes. Acts by interacting with the C-terminal domain of the alpha subunit of the RNA polymerase (RNAP). This interaction can enhance binding of RNAP to the promoter region of target genes and stimulate their transcription, or block interaction of RNAP with activator. This Shouchella clausii (strain KSM-K16) (Alkalihalobacillus clausii) protein is Global transcriptional regulator Spx.